Reading from the N-terminus, the 251-residue chain is Tryptophan synthase alpha chain (251 aa).

Residues glutamate 46 and aspartate 57 each act as proton acceptor in the active site.

The protein belongs to the TrpA family. Tetramer of two alpha and two beta chains.

The enzyme catalyses (1S,2R)-1-C-(indol-3-yl)glycerol 3-phosphate + L-serine = D-glyceraldehyde 3-phosphate + L-tryptophan + H2O. It functions in the pathway amino-acid biosynthesis; L-tryptophan biosynthesis; L-tryptophan from chorismate: step 5/5. The alpha subunit is responsible for the aldol cleavage of indoleglycerol phosphate to indole and glyceraldehyde 3-phosphate. The protein is Tryptophan synthase alpha chain of Karelsulcia muelleri (strain GWSS) (Sulcia muelleri).